Here is a 246-residue protein sequence, read N- to C-terminus: Auxin-responsive protein IAA25 (246 aa).

The segment at 1–22 is disordered; it reads MKSSSVAPRLKQERQDDCKFQE. The segment covering 10–22 has biased composition (basic and acidic residues); sequence LKQERQDDCKFQE. The EAR-like (transcriptional repression) signature appears at 28–32; it reads LELRL. The PB1 domain occupies 143 to 238; that stretch reads TMFVKVNLEG…SVKRLYIAQD (96 aa).

It belongs to the Aux/IAA family. Homodimers and heterodimers. As to expression, highly expressed in flowers. Expressed in roots and seedlings.

Its subcellular location is the nucleus. Functionally, aux/IAA proteins are short-lived transcriptional factors that function as repressors of early auxin response genes at low auxin concentrations. The polypeptide is Auxin-responsive protein IAA25 (IAA25) (Oryza sativa subsp. japonica (Rice)).